The following is a 387-amino-acid chain: MGGAADMRKKTKDRHSWKTGFTTGSCAAGAAKAACLLLKGLHQGTEVDIPLPQGERLQLPVHRWDRVEDVAWVSIIKNAGDDPDVTHGLEVVARVQLLSQRGEILIRGGRGIGVVTKKGLQIPPGESAINPVPRSMIQAAVREVFPQEEILVVIEVPEGERLALKTLNPRLGIMGGVSILGTTGIVRPMSEEAFKNSILPELDQAVAYGHKAIVLTPGNYGFKVAREQLMVPEEAIIQMSNFVGFLLEEAAYRKIEKVLLLGHIGKLIKVAGGIFHTHTHVADARMEILVAHAALAGMDQNSLQTIAELPTVEGAAEEIRSKGWGSLLFKLAERASHRAQDHVHGELQVGTAFTLLNGEIIAWDDPAMEIGKEFWHWPPVEEEFWRK.

It belongs to the CbiD family.

It carries out the reaction Co-precorrin-5B + S-adenosyl-L-methionine = Co-precorrin-6A + S-adenosyl-L-homocysteine. The protein operates within cofactor biosynthesis; adenosylcobalamin biosynthesis; cob(II)yrinate a,c-diamide from sirohydrochlorin (anaerobic route): step 6/10. Its function is as follows. Catalyzes the methylation of C-1 in cobalt-precorrin-5B to form cobalt-precorrin-6A. This chain is Cobalt-precorrin-5B C(1)-methyltransferase, found in Desulfitobacterium hafniense (strain Y51).